We begin with the raw amino-acid sequence, 308 residues long: Ribosomal RNA small subunit methyltransferase H (308 aa).

S-adenosyl-L-methionine contacts are provided by residues 46-48 (AGH), Asp-63, Tyr-87, Asp-108, and Gln-115. Residues 269–308 (TKRPVEASEEERGRNPRARSAKLRAAEKVAAPEGLPEVEV) form a disordered region. The segment covering 271–282 (RPVEASEEERGR) has biased composition (basic and acidic residues).

It belongs to the methyltransferase superfamily. RsmH family.

The protein resides in the cytoplasm. The catalysed reaction is cytidine(1402) in 16S rRNA + S-adenosyl-L-methionine = N(4)-methylcytidine(1402) in 16S rRNA + S-adenosyl-L-homocysteine + H(+). Functionally, specifically methylates the N4 position of cytidine in position 1402 (C1402) of 16S rRNA. The protein is Ribosomal RNA small subunit methyltransferase H of Deinococcus geothermalis (strain DSM 11300 / CIP 105573 / AG-3a).